The following is a 107-amino-acid chain: Anti-adapter protein IraM (107 aa).

The protein belongs to the IraM/RssC family.

The protein localises to the cytoplasm. In terms of biological role, inhibits RpoS proteolysis by regulating RssB activity, thereby increasing the stability of the sigma stress factor RpoS during magnesium starvation. This chain is Anti-adapter protein IraM, found in Escherichia coli (strain K12 / MC4100 / BW2952).